Reading from the N-terminus, the 836-residue chain is CUB domain-containing protein 1 (836 aa).

The first 29 residues, 1 to 29 (MAGLNCGVSIALLGVLLLGAARLPRGAEA), serve as a signal peptide directing secretion. At 30-667 (FEIALPRESN…TLTPRTVDLT (638 aa)) the chain is on the extracellular side. Residues asparagine 39, asparagine 122, asparagine 180, asparagine 205, asparagine 270, asparagine 310, and asparagine 386 are each glycosylated (N-linked (GlcNAc...) asparagine). A CUB domain is found at 417–544 (CTDHRYCQRK…VSFIPYFKEE (128 aa)). Cysteine 476 and cysteine 499 are disulfide-bonded. A helical membrane pass occupies residues 668–688 (VILIAAVGGGVLLLSALGLII). Residues 689 to 836 (CCVKKKKKKT…NTQEPMEPAE (148 aa)) are Cytoplasmic-facing. The residue at position 734 (tyrosine 734) is a Phosphotyrosine. Residues 776-836 (PPTICSRAPT…NTQEPMEPAE (61 aa)) form a disordered region.

As to quaternary structure, interacts with CDH2/N-cadherin, CDH3/P-cadherin, SDC1/syndecan-1, SDC4/syndecan-4 and the serine protease ST14/MT-SP1. Also interacts with SRC and PRKCG/protein kinase C gamma. Phosphorylated on tyrosine by kinases of the SRC family such as SRC and YES as well as by the protein kinase C gamma/PRKCG. Dephosphorylated by phosphotyrosine phosphatases. Also phosphorylated by suramin, a heparin analog. Tyrosine phosphorylated in response to dissociation of integrin alpha-6 beta-4 from laminin-5. Post-translationally, N-glycosylated. In terms of processing, a soluble form may also be produced by proteolytic cleavage at the cell surface (shedding). Another peptide of 80 kDa (p80) is present in cultured keratinocytes probably due to tryptic cleavage at an unidentified site on its N-terminal side. Converted to p80 by plasmin, a trypsin-like protease. In terms of tissue distribution, highly expressed in mitotic cells with low expression during interphase. Detected at highest levels in skeletal muscle and colon with lower levels in kidney, small intestine, placenta and lung. Up-regulated in a number of human tumor cell lines, as well as in colorectal cancer, breast carcinoma and lung cancer. Also expressed in cells with phenotypes reminiscent of mesenchymal stem cells and neural stem cells.

It localises to the cell membrane. The protein resides in the secreted. Functionally, may be involved in cell adhesion and cell matrix association. May play a role in the regulation of anchorage versus migration or proliferation versus differentiation via its phosphorylation. May be a novel marker for leukemia diagnosis and for immature hematopoietic stem cell subsets. Belongs to the tetraspanin web involved in tumor progression and metastasis. The chain is CUB domain-containing protein 1 (CDCP1) from Homo sapiens (Human).